The sequence spans 536 residues: Mitogen-activated protein kinase kinase kinase mom-4 (536 aa).

Residues methionine 1 to proline 20 are compositionally biased toward low complexity. Residues methionine 1–glycine 34 form a disordered region. A Protein kinase domain is found at asparagine 51–leucine 305. ATP-binding positions include leucine 57 to valine 65 and lysine 84. The active-site Proton acceptor is aspartate 176. The tract at residues serine 314–glutamate 438 is disordered. Composition is skewed to polar residues over residues valine 315–proline 325 and asparagine 350–glycine 366. Positions lysine 405–glutamate 438 are enriched in basic and acidic residues.

It belongs to the protein kinase superfamily. STE Ser/Thr protein kinase family. MAP kinase kinase kinase subfamily. As to quaternary structure, interacts with, and is activated by, tap-1. Requires Mg(2+) as cofactor. In terms of processing, may be autophosphorylated.

It catalyses the reaction L-seryl-[protein] + ATP = O-phospho-L-seryl-[protein] + ADP + H(+). It carries out the reaction L-threonyl-[protein] + ATP = O-phospho-L-threonyl-[protein] + ADP + H(+). Its function is as follows. Part of the Wnt signaling pathway essential for the specification of the mesodermal cell fate in early embryos. Stimulates the wrm-1/lit-1-dependent phosphorylation of pop-1 and plays a role in the initial nuclear accumulation of wrm-1. This is Mitogen-activated protein kinase kinase kinase mom-4 from Caenorhabditis elegans.